A 154-amino-acid chain; its full sequence is Transcriptional repressor NrdR (154 aa).

Residues cysteine 3 to cysteine 34 fold into a zinc finger. The region spanning leucine 49–serine 139 is the ATP-cone domain.

Belongs to the NrdR family. The cofactor is Zn(2+).

Its function is as follows. Negatively regulates transcription of bacterial ribonucleotide reductase nrd genes and operons by binding to NrdR-boxes. In Carboxydothermus hydrogenoformans (strain ATCC BAA-161 / DSM 6008 / Z-2901), this protein is Transcriptional repressor NrdR.